The primary structure comprises 385 residues: Glucans biosynthesis protein C (385 aa).

10 consecutive transmembrane segments (helical) span residues 17 to 37 (AWLM…SHTW), 60 to 80 (MQVF…RYPL), 91 to 111 (VGIP…IMLQ), 137 to 157 (ISHL…VWIF), 173 to 193 (KFSM…YAVI), 212 to 232 (FIVM…LAFI), 239 to 259 (LFTT…VAYL), 274 to 294 (TESV…FSFG), 311 to 331 (ASLF…AYIT), and 338 to 358 (WLGF…LYEI).

This sequence belongs to the acyltransferase 3 family. OpgC subfamily.

It is found in the cell membrane. It functions in the pathway glycan metabolism; osmoregulated periplasmic glucan (OPG) biosynthesis. Its function is as follows. Necessary for the succinyl substitution of periplasmic glucans. Could catalyze the transfer of succinyl residues from the cytoplasmic side of the membrane to the nascent glucan backbones on the periplasmic side of the membrane. The protein is Glucans biosynthesis protein C of Escherichia coli O17:K52:H18 (strain UMN026 / ExPEC).